The sequence spans 161 residues: Phosphopantetheine adenylyltransferase (161 aa).

Residue serine 9 coordinates substrate. Residues 9 to 10 (SF) and histidine 17 contribute to the ATP site. Residues lysine 41, threonine 73, and arginine 87 each contribute to the substrate site. ATP contacts are provided by residues 88-90 (GLR), glutamate 98, and 123-129 (YSFISST).

Belongs to the bacterial CoaD family. Homohexamer. The cofactor is Mg(2+).

It is found in the cytoplasm. It catalyses the reaction (R)-4'-phosphopantetheine + ATP + H(+) = 3'-dephospho-CoA + diphosphate. It participates in cofactor biosynthesis; coenzyme A biosynthesis; CoA from (R)-pantothenate: step 4/5. Functionally, reversibly transfers an adenylyl group from ATP to 4'-phosphopantetheine, yielding dephospho-CoA (dPCoA) and pyrophosphate. In Desulforamulus reducens (strain ATCC BAA-1160 / DSM 100696 / MI-1) (Desulfotomaculum reducens), this protein is Phosphopantetheine adenylyltransferase.